Reading from the N-terminus, the 569-residue chain is Alpha-keto-acid decarboxylase (569 aa).

Position 57 (Glu-57) interacts with thiamine diphosphate. A thiamine pyrophosphate binding region spans residues Thr-392–Ile-474. Positions 442, 469, and 471 each coordinate Mg(2+).

It belongs to the TPP enzyme family. It depends on a metal cation as a cofactor. Thiamine diphosphate is required as a cofactor.

Decarboxylates branched-chain and aromatic alpha-keto acids to aldehydes. This is Alpha-keto-acid decarboxylase (kdc) from Mycobacterium leprae (strain TN).